The primary structure comprises 378 residues: D-alanine--D-alanine ligase (378 aa).

One can recognise an ATP-grasp domain in the interval 141 to 347 (KKLLTLNGIR…YSELIDQLIQ (207 aa)). Residue 171–226 (AEELGETLFVKPARQGSSVGIHKVRNEEEYNAALEDGFKYDYKILVEEAIKNPREV) participates in ATP binding. D301, E314, and N316 together coordinate Mg(2+).

Belongs to the D-alanine--D-alanine ligase family. It depends on Mg(2+) as a cofactor. Mn(2+) serves as cofactor.

It localises to the cytoplasm. It carries out the reaction 2 D-alanine + ATP = D-alanyl-D-alanine + ADP + phosphate + H(+). It participates in cell wall biogenesis; peptidoglycan biosynthesis. Cell wall formation. This Ligilactobacillus salivarius (strain UCC118) (Lactobacillus salivarius) protein is D-alanine--D-alanine ligase.